We begin with the raw amino-acid sequence, 241 residues long: 2-C-methyl-D-erythritol 4-phosphate cytidylyltransferase (241 aa).

This sequence belongs to the IspD/TarI cytidylyltransferase family. IspD subfamily.

It carries out the reaction 2-C-methyl-D-erythritol 4-phosphate + CTP + H(+) = 4-CDP-2-C-methyl-D-erythritol + diphosphate. Its pathway is isoprenoid biosynthesis; isopentenyl diphosphate biosynthesis via DXP pathway; isopentenyl diphosphate from 1-deoxy-D-xylulose 5-phosphate: step 2/6. Catalyzes the formation of 4-diphosphocytidyl-2-C-methyl-D-erythritol from CTP and 2-C-methyl-D-erythritol 4-phosphate (MEP). The chain is 2-C-methyl-D-erythritol 4-phosphate cytidylyltransferase from Alkaliphilus metalliredigens (strain QYMF).